The following is a 69-amino-acid chain: DNA-directed RNA polymerase subunit omega (69 aa).

It belongs to the RNA polymerase subunit omega family. The RNAP catalytic core consists of 2 alpha, 1 beta, 1 beta' and 1 omega subunit. When a sigma factor is associated with the core the holoenzyme is formed, which can initiate transcription.

The catalysed reaction is RNA(n) + a ribonucleoside 5'-triphosphate = RNA(n+1) + diphosphate. Promotes RNA polymerase assembly. Latches the N- and C-terminal regions of the beta' subunit thereby facilitating its interaction with the beta and alpha subunits. The protein is DNA-directed RNA polymerase subunit omega of Geobacter metallireducens (strain ATCC 53774 / DSM 7210 / GS-15).